Here is a 420-residue protein sequence, read N- to C-terminus: MREFVNLKFEEMPKVWYNVLSDLPFKLDPPLDPETNKPMSPEKLLKIFPAPLLEQEVNDTDKFIDIPEEILKEYAVYRPTPLIRANFLEEYLQTPAKIYYKYEGQSPTGSHKTNTALAQAYYNKISGVKKLYTETGAGQWGSALSYSGLKFGINVNIYMVRVSFNQKPARKSIMKLFNGKVTPSPSRNTKSGRKYEENHPGSLGIAISEAMEEVLQRNDSKYALGSVLNHVLLHQTIIGLEIKKQLEKLNIQPDVIIGCHGGGSNFGGTILPFIPDKLSGKNIRFIACEPESCPTLTKGEYRYDFGDTAGFTPLLKMYTLGKDFIPPSIHAGGLRYHGAAPIISALLNHNLIEAKAFSQEETFKAARLFSKLEGIIPAPESSHAIAGAIKEALNAKKENKEKIIVFTLSGHGLFDLNAYI.

At Lys112 the chain carries N6-(pyridoxal phosphate)lysine.

The protein belongs to the TrpB family. Tetramer of two alpha and two beta chains. Pyridoxal 5'-phosphate is required as a cofactor.

It carries out the reaction (1S,2R)-1-C-(indol-3-yl)glycerol 3-phosphate + L-serine = D-glyceraldehyde 3-phosphate + L-tryptophan + H2O. It functions in the pathway amino-acid biosynthesis; L-tryptophan biosynthesis; L-tryptophan from chorismate: step 5/5. Functionally, the beta subunit is responsible for the synthesis of L-tryptophan from indole and L-serine. In Thermosipho africanus (strain TCF52B), this protein is Tryptophan synthase beta chain.